Consider the following 209-residue polypeptide: Urease accessory protein UreG (209 aa).

14–21 (GPVGSGKT) contributes to the GTP binding site.

This sequence belongs to the SIMIBI class G3E GTPase family. UreG subfamily. In terms of assembly, homodimer. UreD, UreF and UreG form a complex that acts as a GTP-hydrolysis-dependent molecular chaperone, activating the urease apoprotein by helping to assemble the nickel containing metallocenter of UreC. The UreE protein probably delivers the nickel.

The protein resides in the cytoplasm. Functionally, facilitates the functional incorporation of the urease nickel metallocenter. This process requires GTP hydrolysis, probably effectuated by UreG. The chain is Urease accessory protein UreG from Rhodopseudomonas palustris (strain ATCC BAA-98 / CGA009).